The following is a 121-amino-acid chain: Large ribosomal subunit protein bL20c (121 aa).

Belongs to the bacterial ribosomal protein bL20 family.

It localises to the plastid. It is found in the chloroplast. Its function is as follows. Binds directly to 23S ribosomal RNA and is necessary for the in vitro assembly process of the 50S ribosomal subunit. It is not involved in the protein synthesizing functions of that subunit. The chain is Large ribosomal subunit protein bL20c from Lotus japonicus (Lotus corniculatus var. japonicus).